Consider the following 380-residue polypeptide: Calreticulin-3 (380 aa).

The signal sequence occupies residues 1–19 (MVSARALLWAICVLRVALA). Positions 20–197 (TVYFQEEFLD…GQSIESGSIE (178 aa)) are N-domain. An N-linked (GlcNAc...) asparagine glycan is attached at asparagine 42. An alpha-D-glucoside contacts are provided by tyrosine 109, lysine 111, tyrosine 128, and aspartate 135. Cysteine 137 and cysteine 163 are joined by a disulfide. Tandem repeats lie at residues 191–202 (IESGSIEYDWNL), 209–220 (EKTSLDSRDWDQ), 222–231 (EGSKVQDWEK), 235–246 (DAGASKPSDWNS), 250–256 (GDWLQKP), 260–268 (DGLKAEGID), and 270–280 (DVWLHQKMRPA). The segment at 191–246 (IESGSIEYDWNLTSLRKTEKTSLDSRDWDQVEGSKVQDWEKHFLDAGASKPSDWNS) is 4 X approximate repeats. The segment at 198-291 (YDWNLTSLRK…YLTQYDLSEF (94 aa)) is P-domain. N-linked (GlcNAc...) asparagine glycosylation is present at asparagine 201. A 3 X approximate repeats region spans residues 250 to 280 (GDWLQKPPYEDGLKAEGIDKDVWLHQKMRPA). The C-domain stretch occupies residues 292–380 (ENIGAIGLEL…FSRFHRQGEL (89 aa)). Glutamate 300 lines the an alpha-D-glucoside pocket. The Prevents secretion from ER signature appears at 377 to 380 (QGEL).

It belongs to the calreticulin family. Component of an EIF2 complex at least composed of CELF1/CUGBP1, CALR, CALR3, EIF2S1, EIF2S2, HSP90B1 and HSPA5. Testis specific, absent in mature sperm.

Its subcellular location is the endoplasmic reticulum lumen. In terms of biological role, CALR3 capacity for calcium-binding may be absent or much lower than that of CALR. During spermatogenesis, may act as a lectin-independent chaperone for specific client proteins such as ADAM3. Required for sperm fertility. The protein is Calreticulin-3 (Calr3) of Mus musculus (Mouse).